The following is a 227-amino-acid chain: AN1-type zinc finger protein 3 (227 aa).

An A20-type zinc finger spans residues 12–44 (PSLPPRCPCGFWGSSKTMNLCSKCFADFQKKQP). Positions 18, 20, 32, and 35 each coordinate Zn(2+). Disordered regions lie at residues 41-100 (KKQP…EECG) and 113-148 (PTKR…ETSR). Over residues 49 to 59 (APSTSNSQSDL) the composition is skewed to polar residues. Positions 66–77 (SDNNNTSITTPT) are enriched in low complexity. Composition is skewed to polar residues over residues 78-94 (LSPS…VTSP) and 113-127 (PTKR…SENE). The segment covering 135–148 (RLLENTERSEETSR) has biased composition (basic and acidic residues). An AN1-type zinc finger spans residues 151–200 (QKSRRRCFQCQTKLELVQQELGSCRCGYVFCMLHRLPEQHDCTFDHMGRG). Positions 157, 160, 174, 176, 181, 184, 190, and 192 each coordinate Zn(2+).

This is AN1-type zinc finger protein 3 (ZFAND3) from Homo sapiens (Human).